The sequence spans 869 residues: Facilitated trehalose transporter Tret1 (869 aa).

Disordered stretches follow at residues 1–214 and 258–315; these read MSGR…QKAT and KESS…LIHR. Topologically, residues 1–404 are cytoplasmic; it reads MSGRDNRGAG…VYRPTTNPIY (404 aa). Residues 25–43 show a composition bias toward basic and acidic residues; the sequence is KLKEKLTRAGDDQGYHRVE. Low complexity-rich tracts occupy residues 44–57, 79–92, and 118–127; these read SNLS…SLDT, PQQQ…QQLR, and PFQQQQQRTP. 2 stretches are compositionally biased toward basic and acidic residues: residues 147–156 and 258–291; these read EIREHRDRQQ and KESS…KLDK. S260, S261, S262, S332, and S334 each carry phosphoserine. The disordered stretch occupies residues 336-368; that stretch reads EDFHTSRQHFQQQRSISTDSRKSRRPYEMDEMG. The span at 343-353 shows a compositional bias: polar residues; that stretch reads QHFQQQRSIST. Positions 354-368 are enriched in basic and acidic residues; the sequence is DSRKSRRPYEMDEMG. Residues 405 to 425 form a helical membrane-spanning segment; the sequence is IWTQVLAALSVSLGSLVVGFV. Over 426 to 452 the chain is Extracellular; that stretch reads SAYTSPALVSMTNRNMTSFEVTPQAAS. Residue N440 is glycosylated (N-linked (GlcNAc...) asparagine). The chain crosses the membrane as a helical span at residues 453–473; sequence WVGGIMPLAGLAGGIAGGPFI. Residues 474-485 are Cytoplasmic-facing; that stretch reads EYLGRRNTILAT. The chain crosses the membrane as a helical span at residues 486–506; that stretch reads AIPFIVSSLLIACAVNVAMVL. Residues 507 to 509 are Extracellular-facing; it reads AGR. Residues 510 to 530 form a helical membrane-spanning segment; sequence FLAGFCVGIASLSLPVYLGET. Residues 531–536 lie on the Cytoplasmic side of the membrane; it reads VQPEVR. The chain crosses the membrane as a helical span at residues 537-557; it reads GTLGLLPTAFGNIGILLCFVA. At 558-564 the chain is on the extracellular side; that stretch reads GTYMDWS. The chain crosses the membrane as a helical span at residues 565 to 585; that stretch reads MLAFLGAALPVPFLILMFLIP. Residues 586 to 654 are Cytoplasmic-facing; that stretch reads ETPRWFVSRG…NLKPLSISLG (69 aa). Residues 655 to 675 form a helical membrane-spanning segment; that stretch reads LMFFQQLSGINAVIFYTVSIF. Residues 676–685 lie on the Extracellular side of the membrane; sequence KDAGSTIDGN. A helical transmembrane segment spans residues 686–706; sequence LCTIIVGIVNFMATFIATLLI. Over 707 to 712 the chain is Cytoplasmic; sequence DRAGRK. A helical transmembrane segment spans residues 713–733; sequence ILLYVSNIAMIITLFVLGGFF. At 734-752 the chain is on the extracellular side; the sequence is YCKSHGQDVSQLGWLPLSC. A helical membrane pass occupies residues 753-773; it reads FVIYILGFSLGFGPIPWLMMG. The Cytoplasmic portion of the chain corresponds to 774–779; that stretch reads EILPSK. The chain crosses the membrane as a helical span at residues 780–800; that stretch reads IRGSAASVATAFNWSCTFVVT. Topologically, residues 801–813 are extracellular; that stretch reads KTFQDMIDFMGAH. A helical membrane pass occupies residues 814 to 834; that stretch reads GAFWLFGSICFIGLFFVILYV. Residues 835–869 lie on the Cytoplasmic side of the membrane; that stretch reads PETQGKTLEDIERKMMGRVRRMSSVANMKPLAFNM. Phosphoserine occurs at positions 857 and 858.

It belongs to the major facilitator superfamily. Sugar transporter (TC 2.A.1.1) family. Trehalose transporter subfamily.

The protein localises to the cell membrane. Low-capacity facilitative transporter for trehalose. Does not transport maltose, sucrose or lactose. Mediates the bidirectional transfer of trehalose. Responsible for the transport of trehalose synthesized in the fat body and the incorporation of trehalose into other tissues that require a carbon source, thereby regulating trehalose levels in the hemolymph. In Drosophila persimilis (Fruit fly), this protein is Facilitated trehalose transporter Tret1.